A 444-amino-acid chain; its full sequence is NAD-capped RNA hydrolase NUDT12 (444 aa).

ANK repeat units follow at residues 11–40 (EIIS…SLLN) and 60–80 (SRQT…ANLL). Residue lysine 167 is modified to N6-succinyllysine. The Zn(2+) site is built by cysteine 266 and cysteine 269. The residue at position 274 (lysine 274) is an N6-succinyllysine. Zn(2+) contacts are provided by cysteine 284 and cysteine 289. Residues tyrosine 300, 336–338 (AGF), glutamate 352, glutamate 356, and glutamate 397 contribute to the substrate site. Residues 301-435 (PRVDPVVIMQ…SRAIAHQLIK (135 aa)) enclose the Nudix hydrolase domain. Mg(2+) contacts are provided by alanine 336, glutamate 352, glutamate 356, and glutamate 397. The short motif at 337 to 358 (GFIEPGETIEDAVRREVEEESG) is the Nudix box element. The Microbody targeting signal motif lies at 442–444 (PNL).

Belongs to the Nudix hydrolase family. NudC subfamily. As to quaternary structure, homodimer. Homodimerization is essential for its catalytic activity and protein stability. Interacts (via ANK repeats) with BLMH. Mg(2+) is required as a cofactor. It depends on Zn(2+) as a cofactor.

The protein resides in the cytoplasm. Its subcellular location is the peroxisome. It is found in the cytoplasmic granule. The catalysed reaction is a 5'-end NAD(+)-phospho-ribonucleoside in mRNA + H2O = a 5'-end phospho-adenosine-phospho-ribonucleoside in mRNA + beta-nicotinamide D-ribonucleotide + 2 H(+). It catalyses the reaction NAD(+) + H2O = beta-nicotinamide D-ribonucleotide + AMP + 2 H(+). It carries out the reaction NADH + H2O = reduced beta-nicotinamide D-ribonucleotide + AMP + 2 H(+). The enzyme catalyses NADPH + H2O = reduced beta-nicotinamide D-ribonucleotide + adenosine 2',5'-bisphosphate + 2 H(+). In terms of biological role, mRNA decapping enzyme that specifically removes the nicotinamide adenine dinucleotide (NAD) cap from a subset of mRNAs by hydrolyzing the diphosphate linkage to produce nicotinamide mononucleotide (NMN) and 5' monophosphate mRNA. The NAD-cap is present at the 5'-end of some RNAs; in contrast to the canonical N7 methylguanosine (m7G) cap, the NAD cap promotes mRNA decay. Preferentially acts on NAD-capped transcripts in response to nutrient stress. Also acts on free nicotinamide adenine dinucleotide molecules: hydrolyzes NAD(H) into NMN(H) and AMP, and NADPH into NMNH and 2',5'-ADP. May act to regulate the concentration of peroxisomal nicotinamide nucleotide cofactors required for oxidative metabolism in this organelle. Regulates the levels of circadian clock components PER1, PER2, PER3 and CRY2 in the liver. The chain is NAD-capped RNA hydrolase NUDT12 from Bos taurus (Bovine).